We begin with the raw amino-acid sequence, 784 residues long: Probable aminopeptidase 1 (784 aa).

Residues E103 and 236 to 240 (GAMEN) contribute to the substrate site. H271 serves as a coordination point for Zn(2+). E272 functions as the Proton acceptor in the catalytic mechanism. Residues H275 and E294 each coordinate Zn(2+).

Belongs to the peptidase M1 family. Zn(2+) is required as a cofactor.

Its subcellular location is the cytoplasm. In Saccharolobus solfataricus (strain ATCC 35092 / DSM 1617 / JCM 11322 / P2) (Sulfolobus solfataricus), this protein is Probable aminopeptidase 1 (ape1).